The chain runs to 152 residues: Transcriptional repressor NrdR (152 aa).

A zinc finger spans residues 3–34; it reads CPFCNAADSKVIDSRLAAEGCQIRRRRECVSC. The ATP-cone domain maps to 49–139; sequence PRVIKSNGKN…VYQDFQDVEA (91 aa).

The protein belongs to the NrdR family. Zn(2+) serves as cofactor.

Negatively regulates transcription of bacterial ribonucleotide reductase nrd genes and operons by binding to NrdR-boxes. The chain is Transcriptional repressor NrdR from Acinetobacter baumannii (strain AB0057).